The sequence spans 447 residues: Na(+)-translocating NADH-quinone reductase subunit A (447 aa).

This sequence belongs to the NqrA family. Composed of six subunits; NqrA, NqrB, NqrC, NqrD, NqrE and NqrF.

The catalysed reaction is a ubiquinone + n Na(+)(in) + NADH + H(+) = a ubiquinol + n Na(+)(out) + NAD(+). Its function is as follows. NQR complex catalyzes the reduction of ubiquinone-1 to ubiquinol by two successive reactions, coupled with the transport of Na(+) ions from the cytoplasm to the periplasm. NqrA to NqrE are probably involved in the second step, the conversion of ubisemiquinone to ubiquinol. The protein is Na(+)-translocating NADH-quinone reductase subunit A of Neisseria meningitidis serogroup B (strain ATCC BAA-335 / MC58).